A 181-amino-acid chain; its full sequence is Inner membrane-spanning protein YciB (181 aa).

The next 5 membrane-spanning stretches (helical) occupy residues Phe-8–Ala-28, Ile-53–Phe-73, Trp-76–Gly-96, Leu-121–Phe-141, and Phe-149–Ile-169.

Belongs to the YciB family.

Its subcellular location is the cell inner membrane. Functionally, plays a role in cell envelope biogenesis, maintenance of cell envelope integrity and membrane homeostasis. The polypeptide is Inner membrane-spanning protein YciB (Coxiella burnetii (strain CbuK_Q154) (Coxiella burnetii (strain Q154))).